The chain runs to 1034 residues: Ice nucleation protein InaU (1034 aa).

Residues 162-993 (ATYGSTLSGT…LTAGENSVLI (832 aa)) are octapeptide periodicity. Disordered regions lie at residues 260 to 287 (YGST…KGSD), 311 to 342 (TQTA…GYGS), 356 to 383 (YGST…KGSD), 407 to 438 (TQTA…GYGS), 452 to 480 (YGST…GSDL), and 570 to 597 (AREG…TGYG). Polar residues-rich tracts occupy residues 261 to 286 (GSTQ…QKGS), 311 to 334 (TQTA…QKGS), 357 to 382 (GSTQ…QKGS), 407 to 430 (TQTA…QKGS), 453 to 480 (GSTQ…GSDL), and 580 to 592 (YGST…NSDL).

The protein belongs to the bacterial ice nucleation protein family.

The protein localises to the cell outer membrane. Functionally, ice nucleation proteins enable bacteria to nucleate crystallization in supercooled water. The polypeptide is Ice nucleation protein InaU (inaU) (Pantoea ananas (Erwinia uredovora)).